We begin with the raw amino-acid sequence, 146 residues long: Hemoglobin subunit beta-1 (146 aa).

A Globin domain is found at 2-146; the sequence is EWSSNERSTI…VISALSRQYF (145 aa). Positions 63 and 92 each coordinate heme b.

This sequence belongs to the globin family. Heterotetramer of two alpha chains and two beta chains. In terms of tissue distribution, red blood cells.

In terms of biological role, involved in oxygen transport from gills to the various peripheral tissues. This chain is Hemoglobin subunit beta-1 (hbb1), found in Muraena helena (Mediterranean moray).